We begin with the raw amino-acid sequence, 1582 residues long: Sca1 complex scaffold protein scaA (1582 aa).

Composition is skewed to low complexity over residues 1-14 and 109-131; these read MSSLDPSLSTTPST and LSPSLSSSSSSSSSPSPPTTTST. 2 disordered regions span residues 1–22 and 108–147; these read MSSLDPSLSTTPSTNRRGTFSK and GLSPSLSSSSSSSSSPSPPTTTSTTPPPPNNNNNSKQIKK. One copy of the TPR 1 repeat lies at 4-37; sequence LDPSLSTTPSTNRRGTFSKAKSFRRAALNLEPQG. The stretch at 166-199 is one TPR 2 repeat; it reads IYTSFPESMAFDDYMDYEESLVEWKRQVEQNLGI. The segment at 246-349 is disordered; that stretch reads IKETNSSVND…PSTGSLAGFV (104 aa). Composition is skewed to polar residues over residues 249 to 267, 288 to 310, and 318 to 332; these read TNSSVNDDGESFSHSPTLR, NKDNASSQGTNHGVTLNHPNSGI, and SDTSTGSFEGTQLDG. The residue at position 359 (S359) is a Phosphoserine; by PKB. The tract at residues 400–600 is gefA and gefH binding; it reads RSGSGFGMDH…QRQTSTWFRG (201 aa). Disordered regions lie at residues 468–493 and 686–734; these read PKNSELSTDDGSGGGSGGSGVDGVGG and SLSS…DKDK. Composition is skewed to gly residues over residues 478–493 and 694–714; these read GSGGGSGGSGVDGVGG and QQQGGSGGGSGGSGSGSGSGS. The span at 715–726 shows a compositional bias: low complexity; the sequence is GLNMSGTSGSSG. The stretch at 742 to 777 is one TPR 3 repeat; that stretch reads MHSINNTTNVGTKEDRRQYTKILQTYEQRLQFSFRL. Residues 864–875 are compositionally biased toward gly residues; the sequence is GGGSGGASGGGI. The tract at residues 864–978 is disordered; the sequence is GGGSGGASGG…GSISTHPNTP (115 aa). A compositionally biased stretch (low complexity) spans 903–928; it reads HIPSGSSLLSSPPNRQGSTGSFSFIG. Residues 940–953 show a composition bias toward polar residues; sequence NSSSLESPRTQSQL. The span at 960–972 shows a compositional bias: low complexity; it reads GSSPRSHSGGSIS. The interval 1000–1400 is pppA and pho2B binding; it reads FLDLTNEKLA…SIKKEGNLYN (401 aa). One copy of the TPR 4 repeat lies at 1080–1113; the sequence is TQEVVRLVFVYYYLGIIQERLNFFSNNVGILGFV.

In terms of assembly, component of the Sca1 complex composed of at least gefA, gefH, scaA, phr, and the protein phosphatase 2A subunits pppA and pho2B. In terms of processing, phosphorylated at Ser-359 by PKB and PKBR1 is induced by chemoattractant.

It localises to the cell membrane. Functionally, component of the Sca1 complex, a regulator of cell motility, chemotaxis and signal relay. The Sca1 complex is recruited to the plasma membrane in a chemoattractant- and F-actin-dependent manner and is enriched at the leading edge of chemotaxing cells where it regulates F-actin dynamics and signal relay by controlling the activation of rasC and the downstream target of rapamycin complex 2 (TORC2)-Akt/protein kinase B (PKB) pathway. ScaA acts as a molecular scaffold, bringing together gefA, gefH and phr with PP2A. This Dictyostelium discoideum (Social amoeba) protein is Sca1 complex scaffold protein scaA.